The sequence spans 248 residues: Ubiquinone biosynthesis O-methyltransferase (248 aa).

S-adenosyl-L-methionine-binding residues include R41, G72, D93, and M136.

The protein belongs to the methyltransferase superfamily. UbiG/COQ3 family.

It carries out the reaction a 3-demethylubiquinol + S-adenosyl-L-methionine = a ubiquinol + S-adenosyl-L-homocysteine + H(+). It catalyses the reaction a 3-(all-trans-polyprenyl)benzene-1,2-diol + S-adenosyl-L-methionine = a 2-methoxy-6-(all-trans-polyprenyl)phenol + S-adenosyl-L-homocysteine + H(+). Its pathway is cofactor biosynthesis; ubiquinone biosynthesis. In terms of biological role, O-methyltransferase that catalyzes the 2 O-methylation steps in the ubiquinone biosynthetic pathway. This chain is Ubiquinone biosynthesis O-methyltransferase, found in Rhizobium etli (strain ATCC 51251 / DSM 11541 / JCM 21823 / NBRC 15573 / CFN 42).